Here is a 209-residue protein sequence, read N- to C-terminus: Large ribosomal subunit protein uL3 (209 aa).

Residues 122–152 form a disordered region; that stretch reads AIKRHGQSRGPMSHGSRYHRRPGSMGPVDPN.

It belongs to the universal ribosomal protein uL3 family. In terms of assembly, part of the 50S ribosomal subunit. Forms a cluster with proteins L14 and L19. Interacts with RNA helicase CshA.

One of the primary rRNA binding proteins, it binds directly near the 3'-end of the 23S rRNA, where it nucleates assembly of the 50S subunit. Strongly stimulates 23S rRNA precursor processing by mini-ribonuclease 3 (MrnC); 20-30% DMSO can replace L3, suggesting the protein may alter rRNA conformation. The sequence is that of Large ribosomal subunit protein uL3 from Bacillus subtilis (strain 168).